The chain runs to 140 residues: Ribosomal RNA large subunit methyltransferase H (140 aa).

Positions 55 and 87 each coordinate S-adenosyl-L-methionine.

The protein belongs to the RNA methyltransferase RlmH family. Homodimer.

The protein resides in the cytoplasm. The catalysed reaction is pseudouridine(1915) in 23S rRNA + S-adenosyl-L-methionine = N(3)-methylpseudouridine(1915) in 23S rRNA + S-adenosyl-L-homocysteine + H(+). In terms of biological role, specifically methylates the pseudouridine at position 1915 (m3Psi1915) in 23S rRNA. In Erythrobacter litoralis (strain HTCC2594), this protein is Ribosomal RNA large subunit methyltransferase H.